Reading from the N-terminus, the 326-residue chain is Phospho-N-acetylmuramoyl-pentapeptide-transferase (326 aa).

Helical transmembrane passes span 4–24, 49–69, 74–94, 109–129, 151–171, 179–199, 203–223, 228–248, 254–274, and 303–323; these read IWVA…LVIP, TPTM…FLLI, GLIV…DDYI, KLLG…FEAG, LGWW…SNAV, GLAA…ALAA, GVAA…FFNF, VFMG…AAVV, LFLI…IQVI, and VVIT…AGLY.

Belongs to the glycosyltransferase 4 family. MraY subfamily. Mg(2+) serves as cofactor.

The protein resides in the cell membrane. The catalysed reaction is UDP-N-acetyl-alpha-D-muramoyl-L-alanyl-gamma-D-glutamyl-meso-2,6-diaminopimeloyl-D-alanyl-D-alanine + di-trans,octa-cis-undecaprenyl phosphate = di-trans,octa-cis-undecaprenyl diphospho-N-acetyl-alpha-D-muramoyl-L-alanyl-D-glutamyl-meso-2,6-diaminopimeloyl-D-alanyl-D-alanine + UMP. Its pathway is cell wall biogenesis; peptidoglycan biosynthesis. Functionally, catalyzes the initial step of the lipid cycle reactions in the biosynthesis of the cell wall peptidoglycan: transfers peptidoglycan precursor phospho-MurNAc-pentapeptide from UDP-MurNAc-pentapeptide onto the lipid carrier undecaprenyl phosphate, yielding undecaprenyl-pyrophosphoryl-MurNAc-pentapeptide, known as lipid I. This is Phospho-N-acetylmuramoyl-pentapeptide-transferase from Pelotomaculum thermopropionicum (strain DSM 13744 / JCM 10971 / SI).